The sequence spans 322 residues: Phosphatidylserine decarboxylase proenzyme (322 aa).

Active-site charge relay system; for autoendoproteolytic cleavage activity residues include aspartate 90, histidine 147, and serine 254. The active-site Schiff-base intermediate with substrate; via pyruvic acid; for decarboxylase activity is the serine 254. Residue serine 254 is modified to Pyruvic acid (Ser); by autocatalysis. The tract at residues 292–322 (TPDAEPSPLPAEEIEAEHDASPLVDDKKDQV) is disordered. Residues 308-322 (EHDASPLVDDKKDQV) are compositionally biased toward basic and acidic residues.

Belongs to the phosphatidylserine decarboxylase family. PSD-B subfamily. Prokaryotic type I sub-subfamily. In terms of assembly, heterodimer of a large membrane-associated beta subunit and a small pyruvoyl-containing alpha subunit. The cofactor is pyruvate. In terms of processing, is synthesized initially as an inactive proenzyme. Formation of the active enzyme involves a self-maturation process in which the active site pyruvoyl group is generated from an internal serine residue via an autocatalytic post-translational modification. Two non-identical subunits are generated from the proenzyme in this reaction, and the pyruvate is formed at the N-terminus of the alpha chain, which is derived from the carboxyl end of the proenzyme. The autoendoproteolytic cleavage occurs by a canonical serine protease mechanism, in which the side chain hydroxyl group of the serine supplies its oxygen atom to form the C-terminus of the beta chain, while the remainder of the serine residue undergoes an oxidative deamination to produce ammonia and the pyruvoyl prosthetic group on the alpha chain. During this reaction, the Ser that is part of the protease active site of the proenzyme becomes the pyruvoyl prosthetic group, which constitutes an essential element of the active site of the mature decarboxylase.

Its subcellular location is the cell membrane. The catalysed reaction is a 1,2-diacyl-sn-glycero-3-phospho-L-serine + H(+) = a 1,2-diacyl-sn-glycero-3-phosphoethanolamine + CO2. It participates in phospholipid metabolism; phosphatidylethanolamine biosynthesis; phosphatidylethanolamine from CDP-diacylglycerol: step 2/2. Its function is as follows. Catalyzes the formation of phosphatidylethanolamine (PtdEtn) from phosphatidylserine (PtdSer). The sequence is that of Phosphatidylserine decarboxylase proenzyme from Escherichia coli O7:K1 (strain IAI39 / ExPEC).